The primary structure comprises 53 residues: uncharacterized protein (53 aa).

This is an uncharacterized protein from Plasmodium falciparum (isolate fcm17 / Senegal).